We begin with the raw amino-acid sequence, 34 residues long: Photosystem II reaction center protein T (34 aa).

A helical membrane pass occupies residues 3 to 23 (SVAYILIFTLTIGTLFFAVAF).

The protein belongs to the PsbT family. As to quaternary structure, PSII is composed of 1 copy each of membrane proteins PsbA, PsbB, PsbC, PsbD, PsbE, PsbF, PsbH, PsbI, PsbJ, PsbK, PsbL, PsbM, PsbT, PsbX, PsbY, PsbZ, Psb30/Ycf12, peripheral proteins PsbO, CyanoQ (PsbQ), PsbU, PsbV and a large number of cofactors. It forms dimeric complexes.

The protein localises to the cellular thylakoid membrane. Found at the monomer-monomer interface of the photosystem II (PS II) dimer, plays a role in assembly and dimerization of PSII. PSII is a light-driven water plastoquinone oxidoreductase, using light energy to abstract electrons from H(2)O, generating a proton gradient subsequently used for ATP formation. The sequence is that of Photosystem II reaction center protein T from Mastigocladus laminosus (Fischerella sp.).